The following is a 77-amino-acid chain: YPEPTEGSIGASGAKTSWPEVVGMSAEKAKEIILRDKPNAQIEVIPVDAMVPLNFNPNRVFVLVHKATTVAZVSRVG.

The protein belongs to the protease inhibitor I13 (potato type I serine protease inhibitor) family.

Functionally, inhibits both subtilisin and chymotrypsin. The protein is Subtilisin-chymotrypsin inhibitor CI-1C of Hordeum vulgare (Barley).